Reading from the N-terminus, the 474-residue chain is Gamma-aminobutyric acid receptor subunit beta-1 (474 aa).

The signal sequence occupies residues 1 to 25 (MWTVQNRESLGLLSFPVMITMVCCA). Over 26-245 (HSTNEPSNMS…SFRLKRNIGY (220 aa)) the chain is Extracellular. Residue Asn-105 is glycosylated (N-linked (GlcNAc...) asparagine). Tyr-122 lines the histamine pocket. Cys-161 and Cys-175 are disulfide-bonded. Asn-174 carries an N-linked (GlcNAc...) asparagine glycan. Histamine contacts are provided by residues 181 to 182 (SY) and Thr-227. 2 residues coordinate 4-aminobutanoate: Tyr-182 and Thr-227. 3 helical membrane-spanning segments follow: residues 246–267 (FILQTYMPSTLITILSWVSFWI), 271–293 (ASAARVALGITTVLTMTTISTHL), and 305–327 (AIDIYLMGCFVFVFLALLEYAFV). The Cytoplasmic segment spans residues 328–451 (NYIFFGKGPQ…DLTDVNSIDK (124 aa)). Residues 452 to 473 (WSRMFFPITFSLFNVVYWLYYV) form a helical membrane-spanning segment.

The protein belongs to the ligand-gated ion channel (TC 1.A.9) family. Gamma-aminobutyric acid receptor (TC 1.A.9.5) subfamily. GABRB1 sub-subfamily. In terms of assembly, heteropentamer, formed by a combination of alpha (GABRA1-6), beta (GABRB1-3), gamma (GABRG1-3), delta (GABRD), epsilon (GABRE), rho (GABRR1-3), pi (GABRP) and theta (GABRQ) chains, each subunit exhibiting distinct physiological and pharmacological properties. Binds UBQLN1.

It is found in the postsynaptic cell membrane. The protein resides in the cell membrane. The enzyme catalyses chloride(in) = chloride(out). Its activity is regulated as follows. Potentiated by etomidate, propofol, pregnanolone and flurazepam. Potentiated by histamine. Functionally, beta subunit of the heteropentameric ligand-gated chloride channel gated by gamma-aminobutyric acid (GABA), a major inhibitory neurotransmitter in the brain. GABA-gated chloride channels, also named GABA(A) receptors (GABAAR), consist of five subunits arranged around a central pore and contain one or two GABA active binding sites located at the alpha and beta subunit interfaces, depending on subunit composition. When activated by GABA, GABAARs selectively allow the flow of chloride anions across the cell membrane down their electrochemical gradient. Chloride influx into the postsynaptic neuron following GABAAR opening decreases the neuron ability to generate a new action potential, thereby reducing nerve transmission. Beta-containing GABAARs can simultaneously bind GABA and histamine where histamine binds at the interface of two neighboring beta subunits, which may be involved in the regulation of sleep and wakefulness. This Homo sapiens (Human) protein is Gamma-aminobutyric acid receptor subunit beta-1.